We begin with the raw amino-acid sequence, 91 residues long: Insertion element IS1 2 protein InsA (91 aa).

The protein belongs to the IS1 elements InsA family.

Absolutely required for transposition of IS1. The sequence is that of Insertion element IS1 2 protein InsA (insA2) from Escherichia coli (strain K12).